The following is a 268-amino-acid chain: Thiazole synthase (268 aa).

Catalysis depends on Lys-96, which acts as the Schiff-base intermediate with DXP. Residues Gly-157, 185-186 (AG), and 207-208 (NT) each bind 1-deoxy-D-xylulose 5-phosphate. A disordered region spans residues 238–268 (PMRPREAASPSSPVEGVPFTPTGPRPGRGPQ). A compositionally biased stretch (pro residues) spans 258-268 (PTGPRPGRGPQ).

Belongs to the ThiG family. In terms of assembly, homotetramer. Forms heterodimers with either ThiH or ThiS.

The protein localises to the cytoplasm. The enzyme catalyses [ThiS sulfur-carrier protein]-C-terminal-Gly-aminoethanethioate + 2-iminoacetate + 1-deoxy-D-xylulose 5-phosphate = [ThiS sulfur-carrier protein]-C-terminal Gly-Gly + 2-[(2R,5Z)-2-carboxy-4-methylthiazol-5(2H)-ylidene]ethyl phosphate + 2 H2O + H(+). It functions in the pathway cofactor biosynthesis; thiamine diphosphate biosynthesis. In terms of biological role, catalyzes the rearrangement of 1-deoxy-D-xylulose 5-phosphate (DXP) to produce the thiazole phosphate moiety of thiamine. Sulfur is provided by the thiocarboxylate moiety of the carrier protein ThiS. In vitro, sulfur can be provided by H(2)S. The protein is Thiazole synthase of Thermus thermophilus (strain ATCC BAA-163 / DSM 7039 / HB27).